We begin with the raw amino-acid sequence, 756 residues long: LIM domain and actin-binding protein 1 (756 aa).

M1 bears the N-acetylmethionine mark. Phosphoserine occurs at positions 15 and 55. Over residues 44 to 56 (AAEEANMEKRRSN) the composition is skewed to basic and acidic residues. Disordered regions lie at residues 44–183 (AAEE…SNKI) and 204–377 (QTKI…AVKK). Residues 107 to 118 (EVASSSASGVEA) show a composition bias toward low complexity. The residue at position 130 (S130) is a Phosphoserine. A compositionally biased stretch (basic and acidic residues) spans 140-173 (RIKDTEHLKDHSAESKKMENCLAESRHEVGKPET). Positions 164 to 166 (SRH) match the Required for interaction with NPC1L1 motif. S221 carries the phosphoserine modification. Y225 carries the phosphotyrosine modification. Residues S226 and S238 each carry the phosphoserine modification. Basic and acidic residues predominate over residues 245-254 (EKSESRRNLE). At S259 the chain carries Phosphoserine. The segment covering 274-287 (VSKQSSSTNYTNEL) has biased composition (polar residues). Residues 294 to 303 (IKTHKLEQKE) are compositionally biased toward basic and acidic residues. 5 positions are modified to phosphoserine: S339, S346, S358, S365, and S370. An LIM zinc-binding domain is found at 384–444 (ETCVECQKTV…KPHFNQLFKS (61 aa)). K435 is subject to N6-succinyllysine. Phosphoserine is present on S486. The required for interaction with MYO5B stretch occupies residues 489–509 (VEDAPIAKVGVLTASMEAKAS). Positions 508-726 (ASSQLEKEDK…TTQKQKSQDV (219 aa)) are disordered. The span at 512 to 523 (LEKEDKPAETKK) shows a compositional bias: basic and acidic residues. Over residues 533-542 (ELSSSGSALE) the composition is skewed to low complexity. The span at 552-563 (WPPEDEVSKPEA) shows a compositional bias: basic and acidic residues. Phosphoserine is present on residues S597, S600, S605, and S613. Over residues 627-637 (AERKQMEKASA) the composition is skewed to basic and acidic residues. Residues 638 to 651 (SEKNGSVGKTTWPS) are compositionally biased toward polar residues. A compositionally biased stretch (basic and acidic residues) spans 652–667 (KESRGGEAAGRSKEVQ). A compositionally biased stretch (polar residues) spans 691–721 (LQQQSPLEPKSKNWSSFADNTSAKEFTTQKQ). A phosphoserine mark is found at S695, S723, and S738.

As to quaternary structure, interacts with NPC1L1; bridges NPC1L1 with MYO5B. Interacts with MYO5B; bridges MYO5B with NPC1L1. Interacts with PXN; this complex stabilizes actin dynamics. Interacts with F-actin and G-actin. Interacts with LUZP1 (via C-terminus); both proteins restrict ciliation and may work together to regulate this process. Binds RAB40B (GTP-bound); interaction influences LIMA1 subcellular localization in lamellipodia during cell migration. Phosphorylation of the C-terminal region by MAPK1/MAPK3 reduces its association with F-actin and contributes to actin filament reorganization and enhances cell motility. Post-translationally, ubiquitinated by the ECS(RAB40B) complex leading to its degradation. As to expression, widely expressed. Highest levels of isoform 2 are expressed in lung, spleen and small intestine. Isoform 2 is expressed at higher levels than isoform 1 in most tissues except liver, fat and kidney. Isoform 1 and isoform 2 are expressed at low levels in skeletal muscle, heart, stomach and lymph.

The protein localises to the cytoplasm. It is found in the cell junction. The protein resides in the focal adhesion. It localises to the cytoskeleton. Its subcellular location is the stress fiber. The protein localises to the cell membrane. It is found in the cell projection. The protein resides in the ruffle. It localises to the lamellipodium. Functionally, actin-binding protein involved in actin cytoskeleton regulation and dynamics. Increases the number and size of actin stress fibers and inhibits membrane ruffling. Inhibits actin filament depolymerization. Bundles actin filaments, delays filament nucleation and reduces formation of branched filaments. Acts as a negative regulator of primary cilium formation. Plays a role in cholesterol homeostasis. Influences plasma cholesterol levels through regulation of intestinal cholesterol absorption. May act as a scaffold protein by regulating NPC1L1 transportation, an essential protein for cholesterol absorption, to the plasma membrane by recruiting MYO5B to NPC1L1, and thus facilitates cholesterol uptake. This is LIM domain and actin-binding protein 1 from Sus scrofa (Pig).